Consider the following 141-residue polypeptide: General odorant-binding protein 57b (141 aa).

The N-terminal stretch at 1–22 (MFIYRLVFIAPLILLLFSLAKA) is a signal peptide. 3 disulfides stabilise this stretch: Cys-39–Cys-77, Cys-73–Cys-120, and Cys-111–Cys-129.

It belongs to the PBP/GOBP family.

In terms of biological role, present in the aqueous fluid surrounding olfactory sensory dendrites and are thought to aid in the capture and transport of hydrophobic odorants into and through this fluid. This is General odorant-binding protein 57b from Drosophila melanogaster (Fruit fly).